We begin with the raw amino-acid sequence, 308 residues long: Ornithine carbamoyltransferase (308 aa).

Residues 56–59 (STRT), Gln-83, Arg-107, and 134–137 (HPCQ) each bind carbamoyl phosphate. Residues Asn-165, Asp-225, and 229-230 (SM) each bind L-ornithine. Residues 266 to 267 (CL) and Arg-294 contribute to the carbamoyl phosphate site.

Belongs to the aspartate/ornithine carbamoyltransferase superfamily. OTCase family.

It localises to the cytoplasm. It catalyses the reaction carbamoyl phosphate + L-ornithine = L-citrulline + phosphate + H(+). The protein operates within amino-acid biosynthesis; L-arginine biosynthesis; L-arginine from L-ornithine and carbamoyl phosphate: step 1/3. Functionally, reversibly catalyzes the transfer of the carbamoyl group from carbamoyl phosphate (CP) to the N(epsilon) atom of ornithine (ORN) to produce L-citrulline. The polypeptide is Ornithine carbamoyltransferase (Cereibacter sphaeroides (strain ATCC 17023 / DSM 158 / JCM 6121 / CCUG 31486 / LMG 2827 / NBRC 12203 / NCIMB 8253 / ATH 2.4.1.) (Rhodobacter sphaeroides)).